A 969-amino-acid chain; its full sequence is Vacuolar membrane protease (969 aa).

At 1 to 12 (MTRVNSIIGFRP) the chain is on the cytoplasmic side. The chain crosses the membrane as a helical span at residues 13 to 33 (IPVTLLTVITYVSLFSALLFI). Over 34 to 381 (DRQPPAVAKK…RAFSVLHLHT (348 aa)) the chain is Vacuolar. The N-linked (GlcNAc...) asparagine glycan is linked to N125. 2 residues coordinate Zn(2+): H166 and D178. Residue E216 is the Proton acceptor of the active site. Zn(2+)-binding residues include E217, E242, and H315. An N-linked (GlcNAc...) asparagine glycan is attached at N355. A helical membrane pass occupies residues 382–402 (IFAFTITLIVVPFVVVLVAMW). The Cytoplasmic portion of the chain corresponds to 403–438 (ALGHFDKLYFFSNTAYIPPPPEHSIASRTTQGWRGV). Residues 439–459 (LRFPVAFVAASAGVVGMAFLI) traverse the membrane as a helical segment. At 460–469 (NKINPMVVYA) the chain is on the vacuolar side. The chain crosses the membrane as a helical span at residues 470–490 (SQYTVWTCFLSTWWIIAWVIL). Over 491–505 (RGADAVRPTALARGY) the chain is Cytoplasmic. The chain crosses the membrane as a helical span at residues 506 to 526 (GFLEQWLLWLVAMIGVAISIG). At 527-531 (KSHLG) the chain is on the vacuolar side. Residues 532 to 552 (SGYWVLVFYSGFFTSAFISLL) traverse the membrane as a helical segment. Residues 553–662 (EMAALQKKSE…WSKDLPSWTW (110 aa)) are Cytoplasmic-facing. Residues 571 to 629 (DQAYPPEEHSQTGASGNISNRAANDDDDAGEHATEETPLFRGPNRPLSFAPHRNPRYDN) are disordered. Polar residues predominate over residues 581-592 (QTGASGNISNRA). The helical transmembrane segment at 663 to 683 (ILQFLATVPLQLVLAGSVALL) threads the bilayer. The Vacuolar segment spans residues 684–698 (LGNALAQTGADGSDM). A helical membrane pass occupies residues 699-719 (LTVLLGFGVFSIILLLPVAPF). Over 720–727 (LHRITYHV) the chain is Cytoplasmic. Residues 728–748 (TLFIFVIFVGTFIYNLAAPPF) form a helical membrane-spanning segment. Topologically, residues 749–969 (SPNARLKVYF…LVEGSVPFMI (221 aa)) are vacuolar. N840 carries N-linked (GlcNAc...) asparagine glycosylation.

Belongs to the peptidase M28 family. Zn(2+) is required as a cofactor.

The protein resides in the vacuole membrane. Its function is as follows. May be involved in vacuolar sorting and osmoregulation. In Tuber melanosporum (strain Mel28) (Perigord black truffle), this protein is Vacuolar membrane protease.